The chain runs to 501 residues: Dynein regulatory complex subunit 5 (501 aa).

The span at 1–23 (MQDTVTTSALLDPSHSSVSTQDN) shows a compositional bias: polar residues. Disordered regions lie at residues 1 to 56 (MQDT…HPRA) and 202 to 222 (LPAQ…EMEE). A compositionally biased stretch (low complexity) spans 24-34 (SSTGGHTSSTS). 5 LRR repeats span residues 308–321 (VLEE…LIGD), 335–355 (RLRV…QSLA), 363–383 (NLIS…QALA), 391–411 (CLTT…TLLS), and 419–439 (TLTS…KQLL).

The protein belongs to the DRC5 family. As to quaternary structure, component of the nexin-dynein regulatory complex (N-DRC). Interacts with DRC1. Interacts with FBXL13/DRC6, DRC3 and DRC7.

The protein resides in the cell projection. The protein localises to the cilium. It is found in the flagellum. Its subcellular location is the cytoplasm. It localises to the cytoskeleton. The protein resides in the flagellum axoneme. In terms of biological role, component of the nexin-dynein regulatory complex (N-DRC) a key regulator of ciliary/flagellar motility which maintains the alignment and integrity of the distal axoneme and regulates microtubule sliding in motile axonemes. May play a role in the assembly of N-DRC. May be required for sperm motility. The chain is Dynein regulatory complex subunit 5 (TCTE1) from Homo sapiens (Human).